Reading from the N-terminus, the 583-residue chain is Atlastin-2 (583 aa).

The interval 1–44 is disordered; it reads MAEGDEAARGQQPHQGLWRRRRTSDPSAAVNHVSSTTSLGENYE. The interval 1 to 60 is N-terminal hypervariable region (HVR); it reads MAEGDEAARGQQPHQGLWRRRRTSDPSAAVNHVSSTTSLGENYEDDDLVNSDEVMKKPCP. The Cytoplasmic segment spans residues 1-476; it reads MAEGDEAARG…NIFYAARTPA (476 aa). Ser24 carries the phosphoserine modification. A GB1/RHD3-type G domain is found at 91–336; that stretch reads DLNIVVVSVA…LVPLLLAPEN (246 aa). Positions 104, 105, 106, 107, 108, 109, 175, 244, and 245 each coordinate GDP. GTP-binding residues include Arg104, Lys105, Gly106, Lys107, Ser108, and Phe109. Ser108 lines the Mg(2+) pocket. GTP-binding residues include Arg244 and Asp245. The stretch at 256–284 forms a coiled coil; sequence LEGGKQFLEKRLQVKQNQHEELQNVRKHI. N6-methyllysine is present on Lys270. GDP contacts are provided by Val303 and Asn306. Residue Val303 coordinates GTP. The interval 374 to 465 is 3HB (three-helix bundle) domain; the sequence is MLQATAEANN…YANFIKHNDG (92 aa). The segment at 466–474 is linker; that stretch reads KNIFYAART. Residues 477-497 traverse the membrane as a helical segment; that stretch reads TLFAVMFAMYIISGLTGFIGL. Residues 498–499 are Lumenal-facing; sequence NS. Residues 500-520 traverse the membrane as a helical segment; it reads IAVLCNLVMGLALIFLCTWAY. The Cytoplasmic segment spans residues 521–583; the sequence is VKYSGEFREI…VSHHARLKTD (63 aa). Positions 547–583 are autoinhibitory domain; it reads KPLGDNLMEENIRQSVTNSIKAGLTDQVSHHARLKTD.

It belongs to the TRAFAC class dynamin-like GTPase superfamily. GB1/RHD3 GTPase family. GB1 subfamily. As to quaternary structure, monomeric and homodimeric. The homodimer, transiently formed by two molecules on opposing membranes, is the active form mediating ER membrane fusion. Interacts with REEP5 and RTN3; these proteins are involved in endoplasmic reticulum tubular network organization. Interacts with ZFYVE27; both proteins are involved in endoplasmic reticulum tubular network organization. As to expression, expressed in peripheral tissues (at protein level).

Its subcellular location is the endoplasmic reticulum membrane. It catalyses the reaction GTP + H2O = GDP + phosphate + H(+). With respect to regulation, with its alternative C-terminus disrupting the autoinhibitory domain, this brain-specific isoform is probably more active at fusing ER membranes. Its function is as follows. Atlastin-2 (ATL2) is a membrane-anchored GTPase that mediates the GTP-dependent fusion of endoplasmic reticulum (ER) membranes, maintaining the continuous ER network. It facilitates the formation of three-way junctions where ER tubules intersect. Two atlastin-2 on neighboring ER tubules bind GTP and form loose homodimers through the GB1/RHD3-type G domains and 3HB regions. Upon GTP hydrolysis, the 3HB regions tighten, pulling the membranes together to drive their fusion. After fusion, the homodimer disassembles upon release of inorganic phosphate (Pi). Subsequently, GDP dissociates, resetting the monomers to a conformation ready for a new fusion cycle. The polypeptide is Atlastin-2 (Homo sapiens (Human)).